The following is a 155-amino-acid chain: MSEVILDLQVATENTQGLPSEAQFITWLEAVLPQFQPISEVTIRIVDEAESHELNLTYRGKDRPTNVLSFPFEAPPEVELPLLGDLIICRQVVEKEADEQNKTVEEHWAHMVIHGCLHLLGYDHIEDDEAEEMEGLETEILQKLGYEDPYLIEKE.

Residues His114, His118, and His124 each coordinate Zn(2+).

Belongs to the endoribonuclease YbeY family. Zn(2+) serves as cofactor.

It localises to the cytoplasm. Functionally, single strand-specific metallo-endoribonuclease involved in late-stage 70S ribosome quality control and in maturation of the 3' terminus of the 16S rRNA. This chain is Endoribonuclease YbeY, found in Proteus mirabilis (strain HI4320).